A 276-amino-acid polypeptide reads, in one-letter code: Large ribosomal subunit protein uL2 (276 aa).

Positions 219–276 (TVRGSAMNPNDHPHGGGEGRTSIGRPAPVTPWGKPALGYKTRDSKKASNKMIVSRRKK) are disordered.

Belongs to the universal ribosomal protein uL2 family. In terms of assembly, part of the 50S ribosomal subunit. Forms a bridge to the 30S subunit in the 70S ribosome.

Functionally, one of the primary rRNA binding proteins. Required for association of the 30S and 50S subunits to form the 70S ribosome, for tRNA binding and peptide bond formation. It has been suggested to have peptidyltransferase activity; this is somewhat controversial. Makes several contacts with the 16S rRNA in the 70S ribosome. The polypeptide is Large ribosomal subunit protein uL2 (Alkaliphilus oremlandii (strain OhILAs) (Clostridium oremlandii (strain OhILAs))).